The primary structure comprises 118 residues: Large ribosomal subunit protein bL20 (118 aa).

This sequence belongs to the bacterial ribosomal protein bL20 family.

Its function is as follows. Binds directly to 23S ribosomal RNA and is necessary for the in vitro assembly process of the 50S ribosomal subunit. It is not involved in the protein synthesizing functions of that subunit. This Staphylococcus haemolyticus (strain JCSC1435) protein is Large ribosomal subunit protein bL20.